The following is a 113-amino-acid chain: Cytochrome c (113 aa).

A1 bears the N-acetylalanine mark. Positions 22, 25, and 26 each coordinate heme c. Residue K80 is modified to N6,N6,N6-trimethyllysine. Position 88 (M88) interacts with heme c. K94 carries the N6,N6,N6-trimethyllysine modification.

Belongs to the cytochrome c family. In terms of processing, binds 1 heme c group covalently per subunit.

The protein resides in the mitochondrion intermembrane space. Electron carrier protein. The oxidized form of the cytochrome c heme group can accept an electron from the heme group of the cytochrome c1 subunit of cytochrome reductase. Cytochrome c then transfers this electron to the cytochrome oxidase complex, the final protein carrier in the mitochondrial electron-transport chain. In Ginkgo biloba (Ginkgo), this protein is Cytochrome c.